A 79-amino-acid polypeptide reads, in one-letter code: Cytoinsectotoxin-3 (79 aa).

It belongs to the cationic peptide 06 (cytoinsectotoxin) family. As to expression, expressed by the venom gland.

Its subcellular location is the secreted. Its function is as follows. Insecticidal and antimicrobial peptide. Has insecticidal activity against larvae of flesh fly S.carnaria. Has antibacterial activity against Gram-positive bacterium B.subtilis B-501 (MIC=0.63 uM) and Gram-negative bacterium E.coli DH5alpha (MIC=2.5 uM). This chain is Cytoinsectotoxin-3, found in Lachesana tarabaevi (Spider).